We begin with the raw amino-acid sequence, 388 residues long: P2X purinoceptor 4 (388 aa).

At 1-33 the chain is on the cytoplasmic side; the sequence is MAGCCAALAAFLFEYDTPRIVLIRSRKVGLMNR. Residues 34–54 form a helical membrane-spanning segment; the sequence is AVQLLILAYVIGWVFVWEKGY. Residues 55–338 are Extracellular-facing; it reads QETDSVVSSV…KFDIIPTMIN (284 aa). Lysine 67 and lysine 69 together coordinate ATP. CTP contacts are provided by lysine 67 and lysine 69. Residues asparagine 75 and asparagine 110 are each glycosylated (N-linked (GlcNAc...) asparagine). Cystine bridges form between cysteine 116–cysteine 165, cysteine 126–cysteine 149, and cysteine 132–cysteine 159. 2 N-linked (GlcNAc...) asparagine glycosylation sites follow: asparagine 153 and asparagine 184. Positions 186 and 188 each coordinate ATP. Threonine 186 is a binding site for CTP. N-linked (GlcNAc...) asparagine glycans are attached at residues asparagine 199 and asparagine 208. 2 cysteine pairs are disulfide-bonded: cysteine 217-cysteine 227 and cysteine 261-cysteine 270. 3 residues coordinate ATP: asparagine 293, arginine 295, and lysine 313. CTP-binding residues include asparagine 293, arginine 295, and lysine 313. The chain crosses the membrane as a helical span at residues 339–359; it reads IGSGLALLGMATVLCDIIVLY. Residues 360-388 are Cytoplasmic-facing; that stretch reads CMKKRLYYREKKYKYVEDYEQGLASELDQ.

Belongs to the P2X receptor family. In terms of assembly, functional P2RXs are organized as homomeric and heteromeric trimers. Forms heterotrimer with P2RX1. Interacts with P2RX7 (via C-terminus); this interaction is functional only in the presence of ATP. Forms heterotrimer with P2RX4; functional differences between homomeric P2RX4 and P2RX4/6 heterotrimer are minor. Interacts with AP1M2.

The protein localises to the cell membrane. It localises to the lysosome membrane. It carries out the reaction K(+)(in) = K(+)(out). It catalyses the reaction Na(+)(in) = Na(+)(out). The enzyme catalyses Ca(2+)(in) = Ca(2+)(out). Its activity is regulated as follows. Activated by ATP. pH-dependent and inhibited by acidic pH. Its function is as follows. ATP-gated nonselective transmembrane cation channel permeable to potassium, sodium and calcium. CTP, but not GTP or UTP, functions as a weak affinity agonist for P2RX4. Activated by extracellularly released ATP, it plays multiple role in immunity and central nervous system physiology. Plays a key role in initial steps of T-cell activation and Ca(2+) microdomain formation. Also participates in basal T-cell activity without TCR/CD3 stimulation. Promotes the differentiation and activation of Th17 cells via expression of retinoic acid-related orphan receptor C/RORC. Upon activation, drives microglia motility via the PI3K/Akt pathway. Could also function as an ATP-gated cation channel of lysosomal membranes. This chain is P2X purinoceptor 4 (P2RX4), found in Homo sapiens (Human).